Here is a 292-residue protein sequence, read N- to C-terminus: Elongation factor Ts (292 aa).

Positions 81–84 (TDFV) are involved in Mg(2+) ion dislocation from EF-Tu.

It belongs to the EF-Ts family.

It localises to the cytoplasm. Associates with the EF-Tu.GDP complex and induces the exchange of GDP to GTP. It remains bound to the aminoacyl-tRNA.EF-Tu.GTP complex up to the GTP hydrolysis stage on the ribosome. The sequence is that of Elongation factor Ts from Acidithiobacillus ferrooxidans (strain ATCC 23270 / DSM 14882 / CIP 104768 / NCIMB 8455) (Ferrobacillus ferrooxidans (strain ATCC 23270)).